Reading from the N-terminus, the 189-residue chain is GTPase KRas (189 aa).

Residue Met1 is modified to N-acetylmethionine; in GTPase KRas; alternate. Thr2 is subject to N-acetylthreonine; in GTPase KRas, N-terminally processed. GTP contacts are provided by residues 10–18 (GAGGVGKSA), 29–35 (VDEYDPT), and 59–60 (AG). The short motif at 32–40 (YDPTIEDSY) is the Effector region element. The (Microbial infection) O-linked (Glc) threonine; by P.sordellii toxin TcsL glycan is linked to Thr35. Residue Lys104 is modified to N6-acetyllysine. 116 to 119 (NKCD) is a binding site for GTP. Positions 166–185 (YRLKKISKEEKTPGCVKIKK) are hypervariable region. Lys170 participates in a covalent cross-link: Glycyl lysine isopeptide (Lys-Gly) (interchain with G-Cter in ubiquitin). Cys180 carries the S-palmitoyl cysteine lipid modification. N6-palmitoyl lysine attachment occurs at residues Lys182, Lys184, and Lys185. Position 186 is a cysteine methyl ester (Cys186). A lipid anchor (S-farnesyl cysteine) is attached at Cys186. Positions 187–189 (IIM) are cleaved as a propeptide — removed in mature form.

The protein belongs to the small GTPase superfamily. Ras family. In terms of assembly, interacts with PHLPP. Interacts (active GTP-bound form preferentially) with RGS14. Interacts (when farnesylated) with PDE6D; this promotes dissociation from the cell membrane. Interacts with SOS1. Interacts (when farnesylated) with GPR31. Interacts with RAP1GDS1. Interacts (active GTP-bound form) with both SHOC2 and PP1c (all isoforms) to form a tertiary complex; SHOC2 and PP1c preferably bind M-Ras/MRAS, but they also bind K-Ras/KRAS, N-Ras/NRAS and H-Ras/HRAS. Interacts (GTP-bound form) with MAPKAP1/SIN1; inhibiting K-Ras/KRAS activity. As to quaternary structure, interacts with GPR31; in a farnelysation-dependent manner. Post-translationally, acetylation at Lys-104 prevents interaction with guanine nucleotide exchange factors (GEFs). Palmitoylated at Lys-182, Lys-184 and Lys-185. Palmitoylation on lysine residues is promoted by palmitoylation at Cys-180. Lysine-depalmitoylation by SIRT2 promotes its localization to endomembranes in endocytic pathways. In terms of processing, ubiquitinated by the BCR(LZTR1) E3 ubiquitin ligase complex at Lys-170 in a non-degradative manner, leading to inhibit Ras signaling by decreasing Ras association with membranes. Post-translationally, (Microbial infection) Glucosylated at Thr-35 by P.sordellii toxin TcsL.

It is found in the cell membrane. It localises to the endomembrane system. Its subcellular location is the cytoplasm. The protein resides in the cytosol. It catalyses the reaction GTP + H2O = GDP + phosphate + H(+). Its activity is regulated as follows. Alternates between an inactive form bound to GDP and an active form bound to GTP. Activated by a guanine nucleotide-exchange factor (GEF) and inactivated by a GTPase-activating protein (GAP). Interaction with SOS1 promotes exchange of bound GDP to GTP. In terms of biological role, ras proteins bind GDP/GTP and possess intrinsic GTPase activity. Plays an important role in the regulation of cell proliferation. Plays a role in promoting oncogenic events by inducing transcriptional silencing of tumor suppressor genes (TSGs) in colorectal cancer (CRC) cells in a ZNF304-dependent manner. The chain is GTPase KRas (KRAS) from Homo sapiens (Human).